Reading from the N-terminus, the 416-residue chain is Phosphoribosylamine--glycine ligase (416 aa).

The ATP-grasp domain occupies lysine 107–aspartate 313. Leucine 133–serine 194 serves as a coordination point for ATP. Residues glutamate 283 and asparagine 285 each coordinate Mg(2+).

This sequence belongs to the GARS family. Mg(2+) is required as a cofactor. The cofactor is Mn(2+).

It carries out the reaction 5-phospho-beta-D-ribosylamine + glycine + ATP = N(1)-(5-phospho-beta-D-ribosyl)glycinamide + ADP + phosphate + H(+). Its pathway is purine metabolism; IMP biosynthesis via de novo pathway; N(1)-(5-phospho-D-ribosyl)glycinamide from 5-phospho-alpha-D-ribose 1-diphosphate: step 2/2. The polypeptide is Phosphoribosylamine--glycine ligase (Clostridium acetobutylicum (strain ATCC 824 / DSM 792 / JCM 1419 / IAM 19013 / LMG 5710 / NBRC 13948 / NRRL B-527 / VKM B-1787 / 2291 / W)).